A 938-amino-acid chain; its full sequence is Phosphoenolpyruvate carboxylase (938 aa).

Residues H151 and K591 contribute to the active site.

Belongs to the PEPCase type 1 family. Mg(2+) is required as a cofactor.

It carries out the reaction oxaloacetate + phosphate = phosphoenolpyruvate + hydrogencarbonate. Forms oxaloacetate, a four-carbon dicarboxylic acid source for the tricarboxylic acid cycle. This is Phosphoenolpyruvate carboxylase from Roseiflexus castenholzii (strain DSM 13941 / HLO8).